The following is a 74-amino-acid chain: Cytochrome c oxidase assembly factor 5 (74 aa).

Positions 27-65 constitute a CHCH domain; that stretch reads ESDCVVQEGKSPRQCLKEGYCNSLKYAFFECKRSVLDNR. Positions 30 to 41 match the Cx10C motif motif; that stretch reads CVVQEGKSPRQC. 2 disulfides stabilise this stretch: Cys30-Cys57 and Cys41-Cys47. Ser37 bears the Phosphoserine mark. The short motif at 47-57 is the Cx9C motif element; sequence CNSLKYAFFEC.

It belongs to the PET191 family.

Functionally, involved in an early step of the mitochondrial complex IV assembly process. The chain is Cytochrome c oxidase assembly factor 5 (Coa5) from Pongo abelii (Sumatran orangutan).